A 908-amino-acid polypeptide reads, in one-letter code: Protein translocase subunit SecA (908 aa).

ATP is bound by residues Q87, 105-109 (GEGKT), and D512. Residues 882-908 (DGEKVGRNDPCPCGSGKKYKQCHGKLT) form a disordered region. Residues C892, C894, C903, and H904 each contribute to the Zn(2+) site. Over residues 898–908 (KKYKQCHGKLT) the composition is skewed to basic residues.

Belongs to the SecA family. As to quaternary structure, monomer and homodimer. Part of the essential Sec protein translocation apparatus which comprises SecA, SecYEG and auxiliary proteins SecDF-YajC and YidC. It depends on Zn(2+) as a cofactor.

Its subcellular location is the cell inner membrane. It is found in the cytoplasm. It catalyses the reaction ATP + H2O + cellular proteinSide 1 = ADP + phosphate + cellular proteinSide 2.. Functionally, part of the Sec protein translocase complex. Interacts with the SecYEG preprotein conducting channel. Has a central role in coupling the hydrolysis of ATP to the transfer of proteins into and across the cell membrane, serving both as a receptor for the preprotein-SecB complex and as an ATP-driven molecular motor driving the stepwise translocation of polypeptide chains across the membrane. The sequence is that of Protein translocase subunit SecA from Shewanella amazonensis (strain ATCC BAA-1098 / SB2B).